A 220-amino-acid chain; its full sequence is Protein-methionine-sulfoxide reductase heme-binding subunit MsrQ (220 aa).

Transmembrane regions (helical) follow at residues 20–40 (LWLL…LGAT), 51–71 (FEHL…LVTP), 86–106 (ALGL…MVLD), 122–142 (PFIT…LTSN), 153–173 (WSSL…HFLM), and 175–195 (VKSW…LLLW).

It belongs to the MsrQ family. Heterodimer of a catalytic subunit (MsrP) and a heme-binding subunit (MsrQ). FMN serves as cofactor. Heme b is required as a cofactor.

It is found in the cell inner membrane. Its function is as follows. Part of the MsrPQ system that repairs oxidized periplasmic proteins containing methionine sulfoxide residues (Met-O), using respiratory chain electrons. Thus protects these proteins from oxidative-stress damage caused by reactive species of oxygen and chlorine generated by the host defense mechanisms. MsrPQ is essential for the maintenance of envelope integrity under bleach stress, rescuing a wide series of structurally unrelated periplasmic proteins from methionine oxidation. MsrQ provides electrons for reduction to the reductase catalytic subunit MsrP, using the quinone pool of the respiratory chain. The polypeptide is Protein-methionine-sulfoxide reductase heme-binding subunit MsrQ (Brucella melitensis biotype 2 (strain ATCC 23457)).